The chain runs to 103 residues: MDPQQKGLVNTCFVTTRIPSWAGARQNVTGSDLEGKPVPSDVLESGRPLAAPRIRTLYEEQQLNMLAVNVLLDELKIQVAAMQNSVTAIQREVNDLKQRIARD.

Residues 72–99 are a coiled coil; that stretch reads LDELKIQVAAMQNSVTAIQREVNDLKQR.

It belongs to the adenoviridae hexon-interlacing protein family. As to quaternary structure, homotrimer. Interacts with hexon protein; this interaction tethers the hexons together. Self-interacts with adjacent proteins. Interacts with kinesin light chain KLC1; this interaction leads to capsid disruption at the nuclear pore complex during virus entry into host cell.

It is found in the virion. It localises to the host nucleus. Its function is as follows. Structural component of the virion that acts as a cement protein on the capsid exterior and forms triskelion structures consisting of three molecules that stabilize three hexon trimers at the center of each icosahedral facet and fixes the peripentonal hexons. Dispensable for assembly. During virus entry, recruits the anterograde motor kinesin-1 to the capsid docked at the nuclear pore complex thereby subjecting the docked capsid to a pulling force. The resulting tension leads to capsid disruption, dispersion of capsid fragments toward cell periphery and eventually viral DNA entry into the host nucleus. This is Hexon-interlacing protein from Canis lupus familiaris (Dog).